We begin with the raw amino-acid sequence, 549 residues long: Probable protein kinase UbiB (549 aa).

Positions 123-501 constitute a Protein kinase domain; the sequence is DFEDTPLASA…QQKAHKSNYL (379 aa). ATP-binding positions include 129–137 and K152; that span reads LASASISQV. D287 functions as the Proton acceptor in the catalytic mechanism. 2 helical membrane passes run 498-518 and 520-540; these read SNYLLITSAILVICGTILLNQ and ATLWASYGSIGTGLILWVLGW.

It belongs to the ABC1 family. UbiB subfamily.

The protein localises to the cell inner membrane. It functions in the pathway cofactor biosynthesis; ubiquinone biosynthesis [regulation]. Its function is as follows. Is probably a protein kinase regulator of UbiI activity which is involved in aerobic coenzyme Q (ubiquinone) biosynthesis. In Shewanella piezotolerans (strain WP3 / JCM 13877), this protein is Probable protein kinase UbiB.